The primary structure comprises 280 residues: Nucleotide-binding protein Mfla_0145 (280 aa).

An ATP-binding site is contributed by 8–15 (GLSGSGKS). 57–60 (DTRS) is a binding site for GTP.

The protein belongs to the RapZ-like family.

Functionally, displays ATPase and GTPase activities. This chain is Nucleotide-binding protein Mfla_0145, found in Methylobacillus flagellatus (strain ATCC 51484 / DSM 6875 / VKM B-1610 / KT).